The following is a 69-amino-acid chain: Small integral membrane protein 20 (69 aa).

At 1 to 8 (MAAARNLR) the chain is on the mitochondrial matrix side. The helical transmembrane segment at 9–29 (TALIFGGFISMVGAAFYPIYF) threads the bilayer. Residues 30–69 (RPLLRLEEYQKEQAVNRAGIVQEDVQPPGLKVWSDPFGRK) lie on the Mitochondrial intermembrane side of the membrane. Residue F66 is modified to Phenylalanine amide.

In terms of assembly, component of the MITRAC (mitochondrial translation regulation assembly intermediate of cytochrome c oxidase complex) complex, the core components of this complex being Coa3/Mitrac12 and Cox14. Interacts with Coa3/Mitrac12 and Cox4i1. Directly interacts with newly synthesized Mt-Co1/Cox1. In terms of tissue distribution, highly expressed in the hypothalamus, substantia nigra reticulata, Edinger-Westphal nucleus, and nucleus of the solitary tract/dorsal motor nucleus of the vagus, the spinal cord, and sensory ganglia (at protein level). Also expressed in the heart, thymus, esophagus, stomach, spleen, lung, pituitary gland, kidney, jejunum, duodenum, ileum, cerebrum, pons, and colon (at protein level). Expressed in preadipocytes and apidocytes (at protein level). Expressed in pancreatic islet cells (at protein level).

It localises to the mitochondrion inner membrane. The protein localises to the secreted. Functionally, component of the MITRAC (mitochondrial translation regulation assembly intermediate of cytochrome c oxidase complex) complex, that regulates cytochrome c oxidase assembly. Promotes the progression of complex assembly after the association of Mt-Co1/Cox11 with Cox4I1 and Cox6c. Chaperone-like assembly factor required to stabilize newly synthesized Mt-Co1/Cox1 and to prevent its premature turnover. In terms of biological role, peptide involved in a broad spectrum of regulatory functions. Is a ligand for GPR173. As part of the reproductive cycle, it regulates gonadotropin-releasing hormone (GnRH) signaling in the hypothalamus and pituitary gland which augments the release of luteinizing hormone. More specifically, it regulates the expression of transcription factors CEBPB and POU2F1/OCT1 through the cAMP-PKA signaling pathway, which subsequently regulate the expression of GNRHR and KISS1. Plays a protective role in memory retention through activation of GNRHR. Regulates the secretion of AVP by hypothalamic neurons. Plays a role in the transduction of the itch sensation. Induces anxiolytic effects, reducing behavior associated with anxiety. Regulates food intake as well as satiation and satiety by increasing NUCB2 expression in neurons. In the ovary, it regulates follicular growth by stimulating granulosa cell proliferation by increasing the expression of GPR173, CREB1, CYP19A1, KITLG, FSHR, and LHCGR. It also increases the production of estradiol (E2). In the heart, it regulates contractility and relaxation by activating the AKT1-NOS3 and MAPK1-MAPK3 signaling pathways. It also plays a cardioprotective role during ischemia, where it activates the SAFE and RISK pathways. Stimulates the proliferation and differentiation of preadipocytes. In pancreatic islet cells, it induces proliferation of islet cells as well as the production of INS1 and INS2 through activation of the MAPK1-MAPK3 signaling pathways. This chain is Small integral membrane protein 20, found in Rattus norvegicus (Rat).